Consider the following 347-residue polypeptide: Quinolinate synthase (347 aa).

Iminosuccinate contacts are provided by histidine 47 and serine 68. Position 113 (cysteine 113) interacts with [4Fe-4S] cluster. Iminosuccinate contacts are provided by residues tyrosine 139–asparagine 141 and serine 156. Residue cysteine 200 coordinates [4Fe-4S] cluster. Residues histidine 226–glutamate 228 and threonine 243 each bind iminosuccinate. A [4Fe-4S] cluster-binding site is contributed by cysteine 297.

The protein belongs to the quinolinate synthase family. Type 1 subfamily. It depends on [4Fe-4S] cluster as a cofactor.

Its subcellular location is the cytoplasm. It carries out the reaction iminosuccinate + dihydroxyacetone phosphate = quinolinate + phosphate + 2 H2O + H(+). The protein operates within cofactor biosynthesis; NAD(+) biosynthesis; quinolinate from iminoaspartate: step 1/1. Its function is as follows. Catalyzes the condensation of iminoaspartate with dihydroxyacetone phosphate to form quinolinate. The protein is Quinolinate synthase of Salmonella choleraesuis (strain SC-B67).